Reading from the N-terminus, the 100-residue chain is Aspartyl/glutamyl-tRNA(Asn/Gln) amidotransferase subunit C (100 aa).

The protein belongs to the GatC family. In terms of assembly, heterotrimer of A, B and C subunits.

It carries out the reaction L-glutamyl-tRNA(Gln) + L-glutamine + ATP + H2O = L-glutaminyl-tRNA(Gln) + L-glutamate + ADP + phosphate + H(+). The enzyme catalyses L-aspartyl-tRNA(Asn) + L-glutamine + ATP + H2O = L-asparaginyl-tRNA(Asn) + L-glutamate + ADP + phosphate + 2 H(+). Allows the formation of correctly charged Asn-tRNA(Asn) or Gln-tRNA(Gln) through the transamidation of misacylated Asp-tRNA(Asn) or Glu-tRNA(Gln) in organisms which lack either or both of asparaginyl-tRNA or glutaminyl-tRNA synthetases. The reaction takes place in the presence of glutamine and ATP through an activated phospho-Asp-tRNA(Asn) or phospho-Glu-tRNA(Gln). This is Aspartyl/glutamyl-tRNA(Asn/Gln) amidotransferase subunit C from Erythrobacter litoralis (strain HTCC2594).